The sequence spans 151 residues: MARKVIANNKKALFDFHILERLEAGIALSGSEVKAIRAGRVNLKDSFVKIIKGEAFLLNAHISYLETTNPHYKPDERRPRKLLLHRKQIDKLTGSVSTEGMTLVTLSIYFNERNRAKAEIALAKGKNLHDKRETLKKRILDREVKAALKEH.

This sequence belongs to the SmpB family.

Its subcellular location is the cytoplasm. Required for rescue of stalled ribosomes mediated by trans-translation. Binds to transfer-messenger RNA (tmRNA), required for stable association of tmRNA with ribosomes. tmRNA and SmpB together mimic tRNA shape, replacing the anticodon stem-loop with SmpB. tmRNA is encoded by the ssrA gene; the 2 termini fold to resemble tRNA(Ala) and it encodes a 'tag peptide', a short internal open reading frame. During trans-translation Ala-aminoacylated tmRNA acts like a tRNA, entering the A-site of stalled ribosomes, displacing the stalled mRNA. The ribosome then switches to translate the ORF on the tmRNA; the nascent peptide is terminated with the 'tag peptide' encoded by the tmRNA and targeted for degradation. The ribosome is freed to recommence translation, which seems to be the essential function of trans-translation. This Wolinella succinogenes (strain ATCC 29543 / DSM 1740 / CCUG 13145 / JCM 31913 / LMG 7466 / NCTC 11488 / FDC 602W) (Vibrio succinogenes) protein is SsrA-binding protein.